The sequence spans 368 residues: COP9 signalosome complex subunit 5 (368 aa).

The MPN domain occupies 56–193; sequence IKISAIALLK…IGAFRTYPEG (138 aa). Residues His-139, His-141, and Asp-152 each coordinate Zn(2+). Positions 139–152 match the JAMM motif motif; it reads HSHPGYGCWLSGID. A disordered region spans residues 347 to 368; it reads TEPEKAGPSPSAPEPAVEMADA.

It belongs to the peptidase M67A family. CSN5 subfamily. As to quaternary structure, component of the CSN complex, probably composed of csn-1, csn-2, csn-3, csn-4, csn-5, csn-6 and csn-7. Within the complex it probably interacts directly with csn-1. Interacts with glh-1 and glh-3. Interacts with lag-1. Interacts with kgb-1. It depends on a divalent metal cation as a cofactor.

The protein localises to the cytoplasm. It localises to the nucleus. Functionally, probable protease subunit of the COP9 signalosome complex (CSN), a complex involved in various cellular and developmental processes. The CSN complex is an essential regulator of the ubiquitin (Ubl) conjugation pathway by mediating the deneddylation of the cullin subunits of the SCF-type E3 ligase complexes, leading to decrease the Ubl ligase activity of SCF. In the complex, it probably acts as the catalytic center that mediates the cleavage of Nedd8 from cullins. It however has no metalloprotease activity by itself and requires the other subunits of the CSN complex. The CSN complex plays an essential role in embryogenesis and oogenesis and is required to regulate microtubule stability in the early embryo. Mediates mei-3/katanin targeting for degradation at the meiosis to mitosis transition via deneddylation of cul-3. May stabilize glh-1 protein levels by antagonizing kgb-1. The chain is COP9 signalosome complex subunit 5 (csn-5) from Caenorhabditis elegans.